The sequence spans 346 residues: Phosphoribosylformylglycinamidine cyclo-ligase (346 aa).

This sequence belongs to the AIR synthase family.

It is found in the cytoplasm. It carries out the reaction 2-formamido-N(1)-(5-O-phospho-beta-D-ribosyl)acetamidine + ATP = 5-amino-1-(5-phospho-beta-D-ribosyl)imidazole + ADP + phosphate + H(+). It functions in the pathway purine metabolism; IMP biosynthesis via de novo pathway; 5-amino-1-(5-phospho-D-ribosyl)imidazole from N(2)-formyl-N(1)-(5-phospho-D-ribosyl)glycinamide: step 2/2. The polypeptide is Phosphoribosylformylglycinamidine cyclo-ligase (Bacillus cereus (strain B4264)).